We begin with the raw amino-acid sequence, 633 residues long: Chaperone protein DnaK (633 aa).

Thr-198 is modified (phosphothreonine; by autocatalysis).

This sequence belongs to the heat shock protein 70 family.

Acts as a chaperone. This chain is Chaperone protein DnaK, found in Rhodopseudomonas palustris (strain HaA2).